A 264-amino-acid polypeptide reads, in one-letter code: Merozoite surface protein 2 (264 aa).

An N-terminal signal peptide occupies residues 1–20 (MKVIKTLSIINFFIFVTFNI). N-linked (GlcNAc...) asparagine glycosylation is found at Asn-22 and Asn-36. The interval 44-190 (ANEGSNTNSV…PQTAENENPA (147 aa)) is polymorphic region. Residues 46–225 (EGSNTNSVGA…DSQKECTDGN (180 aa)) form a disordered region. Tandem repeats lie at residues 60 to 91 (ADTI…TPTA) and 92 to 123 (ADTI…TPTA). The interval 60–123 (ADTIASGSQR…GESQTTTPTA (64 aa)) is 2 X 32 AA perfects repeats. Over residues 70-81 (STNSASTSTTNN) the composition is skewed to low complexity. Positions 82 to 101 (GESQTTTPTAADTIASGSQR) are enriched in polar residues. Positions 102 to 145 (STNSASTSTTNNGESQTTTPTAADTPTTTESNSPSPPITTTESS) are enriched in low complexity. Asn-152 carries an N-linked (GlcNAc...) asparagine glycan. Residues 154–166 (TDGKGEESEKQNE) are compositionally biased toward basic and acidic residues. Residues Asn-168 and Asn-213 are each glycosylated (N-linked (GlcNAc...) asparagine). Cys-221 and Cys-229 form a disulfide bridge. Asn-237 and Asn-238 each carry an N-linked (GlcNAc...) asparagine glycan. Asn-238 carries GPI-anchor amidated asparagine lipidation. A propeptide spans 239–264 (SSNIASINKFVVLISATLVLSFAIFI) (removed in mature form).

It is found in the cell membrane. Functionally, may play a role in the merozoite attachment to the erythrocyte. This Plasmodium falciparum (isolate fid3 / India) protein is Merozoite surface protein 2.